Consider the following 756-residue polypeptide: Conserved oligomeric Golgi complex subunit 2 (756 aa).

Residues 62–82 (RSELRSHLASLNRELVDLINR) are a coiled coil. The interval 173–199 (WQNEDANSMGRSSMNDENSTQQDGTTM) is disordered.

It belongs to the COG2 family. As to quaternary structure, homodimer. Component of the conserved oligomeric Golgi complex which is composed of eight different subunits and is required for normal Golgi morphology and localization. Binds to COG3 and COG4. Interacts with FPP3/VETH1 and FPP2/VETH2; this interaction promotes the association between cortical microtubules and EXO70A1. Binds to SEC15B, and, possibly, with EXO70A1, SEC3A and SEC10A.

Its subcellular location is the golgi apparatus membrane. In terms of biological role, required for normal Golgi morphology and function. Ensures, when in complex with FPP3/VETH1 and FPP2/VETH2, the correct secondary cell wall (SCW) deposition pattern by recruiting exocyst components to cortical microtubules in xylem cells during secondary cell wall deposition. This is Conserved oligomeric Golgi complex subunit 2 from Arabidopsis thaliana (Mouse-ear cress).